A 168-amino-acid chain; its full sequence is Transcriptional repressor NrdR (168 aa).

The tract at residues 1–21 is disordered; that stretch reads MQCPACRHTDSRVLESRSSES. A zinc finger spans residues 3 to 34; sequence CPACRHTDSRVLESRSSESGRSVRRRRECLSC. Over residues 7 to 20 the composition is skewed to basic and acidic residues; it reads RHTDSRVLESRSSE. Residues 49–139 enclose the ATP-cone domain; it reads ISVIKRNGDR…VYRQFRGVRD (91 aa).

The protein belongs to the NrdR family. Requires Zn(2+) as cofactor.

In terms of biological role, negatively regulates transcription of bacterial ribonucleotide reductase nrd genes and operons by binding to NrdR-boxes. This Synechococcus elongatus (strain ATCC 33912 / PCC 7942 / FACHB-805) (Anacystis nidulans R2) protein is Transcriptional repressor NrdR.